A 500-amino-acid polypeptide reads, in one-letter code: Inner membrane transporter YjeM (500 aa).

Over 1-7 the chain is Cytoplasmic; the sequence is MPHTIKK. A helical membrane pass occupies residues 8–28; that stretch reads MSLIGLILMIFTSVFGFANSP. The Periplasmic portion of the chain corresponds to 29 to 37; that stretch reads SAYYLMGYS. The helical transmembrane segment at 38 to 58 threads the bilayer; sequence AIPFYIFSALLFFIPFALMMA. Residues 59 to 82 lie on the Cytoplasmic side of the membrane; sequence EMGAAYRKEEGGIYSWMNNSVGPR. A helical transmembrane segment spans residues 83–103; sequence FAFIGTFMWFSSYIIWMVSTS. Residues 104-132 lie on the Periplasmic side of the membrane; it reads AKVWVPFSTFLYGSDMTQHWRIAGLEPTQ. The helical transmembrane segment at 133–153 threads the bilayer; the sequence is VVGLLAVAWMILVTVVASKGI. Over 154-163 the chain is Cytoplasmic; that stretch reads NKIARITAVG. A helical membrane pass occupies residues 164–184; sequence GIAVMCLNLVLLLVSITILLL. Topologically, residues 185–209 are periplasmic; it reads NGGHFAQDINFLASPNPGYQSGLAM. The helical transmembrane segment at 210–230 threads the bilayer; that stretch reads LSFVVFAIFAYGGIEAVGGLV. At 231–243 the chain is on the cytoplasmic side; that stretch reads DKTENPEKNFAKG. The chain crosses the membrane as a helical span at residues 244 to 264; that stretch reads IVFAAIVISIGYSLAIFLWGV. Over 265–319 the chain is Periplasmic; sequence STNWQQVLSNGSVNLGNITYVLMKSLGMTLGNALHLSPEASLSLGVWFARITGLS. The chain crosses the membrane as a helical span at residues 320 to 340; sequence MFLAYTGAFFTLCYSPLKAII. The Cytoplasmic segment spans residues 341–369; it reads QGTPKALWPEPMTRLNAMGMPSIAMWMQC. Residues 370–390 traverse the membrane as a helical segment; the sequence is GLVTVFILLVSFGGGTASAFF. Residues 391 to 394 are Periplasmic-facing; that stretch reads NKLT. A helical transmembrane segment spans residues 395–415; it reads LMANVSMTLPYLFLALAFPFF. At 416–433 the chain is on the cytoplasmic side; that stretch reads KARQDLDRPFVIFKTHLS. Residues 434–454 form a helical membrane-spanning segment; it reads AMIATVVVVLVVTFANVFTII. Over 455–462 the chain is Periplasmic; sequence QPVVEAGD. Residues 463-483 traverse the membrane as a helical segment; that stretch reads WDSTLWMIGGPVFFSLLAMAI. The Cytoplasmic segment spans residues 484–500; it reads YQNYCSRVAKNPQWAVE.

Belongs to the amino acid-polyamine-organocation (APC) superfamily.

Its subcellular location is the cell inner membrane. The polypeptide is Inner membrane transporter YjeM (yjeM) (Escherichia coli (strain K12)).